A 157-amino-acid polypeptide reads, in one-letter code: S-ribosylhomocysteine lyase (157 aa).

Fe cation contacts are provided by His54, His58, and Cys124.

It belongs to the LuxS family. As to quaternary structure, homodimer. Fe cation is required as a cofactor.

It catalyses the reaction S-(5-deoxy-D-ribos-5-yl)-L-homocysteine = (S)-4,5-dihydroxypentane-2,3-dione + L-homocysteine. Involved in the synthesis of autoinducer 2 (AI-2) which is secreted by bacteria and is used to communicate both the cell density and the metabolic potential of the environment. The regulation of gene expression in response to changes in cell density is called quorum sensing. Catalyzes the transformation of S-ribosylhomocysteine (RHC) to homocysteine (HC) and 4,5-dihydroxy-2,3-pentadione (DPD). The polypeptide is S-ribosylhomocysteine lyase (Oenococcus oeni (strain ATCC BAA-331 / PSU-1)).